The chain runs to 89 residues: MSITAERKTALIKDYAKGNKDTGSPEVQIAILTERITNLTAHFKTHGKDNHSRRGLLKLVSQRRSLLDYLKRKEEARYRTLIERLGIRR.

It belongs to the universal ribosomal protein uS15 family. In terms of assembly, part of the 30S ribosomal subunit. Forms a bridge to the 50S subunit in the 70S ribosome, contacting the 23S rRNA.

Its function is as follows. One of the primary rRNA binding proteins, it binds directly to 16S rRNA where it helps nucleate assembly of the platform of the 30S subunit by binding and bridging several RNA helices of the 16S rRNA. Forms an intersubunit bridge (bridge B4) with the 23S rRNA of the 50S subunit in the ribosome. The polypeptide is Small ribosomal subunit protein uS15 (Methylorubrum extorquens (strain CM4 / NCIMB 13688) (Methylobacterium extorquens)).